Consider the following 384-residue polypeptide: Guanine nucleotide-binding protein alpha-1 subunit (384 aa).

Gly2 carries the N-myristoyl glycine lipid modification. Cys5 carries S-palmitoyl cysteine lipidation. Residues 38–384 (HIQKLLLLGA…RRNLFEAGLL (347 aa)) form the G-alpha domain. The G1 motif stretch occupies residues 41-54 (KLLLLGAGESGKST). GTP contacts are provided by Glu49, Ser50, Gly51, Lys52, Ser53, Thr54, Leu188, Tyr189, Thr194, Gly222, Asn288, Lys289, Asp291, and Ala356. Mg(2+) is bound at residue Ser53. A G2 motif region spans residues 186-194 (DVLYARVRT). Thr194 is a binding site for Mg(2+). The G3 motif stretch occupies residues 215–224 (YRLFDVGGQR). A G4 motif region spans residues 284–291 (MLFLNKFD). Residues 354–359 (TTALDQ) are G5 motif.

Belongs to the G-alpha family. In terms of assembly, g proteins are composed of 3 units; alpha, beta and gamma. The alpha chain contains the guanine nucleotide binding site. It depends on Mg(2+) as a cofactor.

In terms of biological role, guanine nucleotide-binding proteins (G proteins) are involved as modulators or transducers in various transmembrane signaling systems. In Lupinus luteus (European yellow lupine), this protein is Guanine nucleotide-binding protein alpha-1 subunit (GPA1).